The chain runs to 212 residues: Orotate phosphoribosyltransferase (212 aa).

Residues R97, K101, H103, and E123–S131 contribute to the 5-phospho-alpha-D-ribose 1-diphosphate site. Orotate is bound at residue S127.

Belongs to the purine/pyrimidine phosphoribosyltransferase family. PyrE subfamily. In terms of assembly, homodimer. The cofactor is Mg(2+).

It catalyses the reaction orotidine 5'-phosphate + diphosphate = orotate + 5-phospho-alpha-D-ribose 1-diphosphate. It functions in the pathway pyrimidine metabolism; UMP biosynthesis via de novo pathway; UMP from orotate: step 1/2. Functionally, catalyzes the transfer of a ribosyl phosphate group from 5-phosphoribose 1-diphosphate to orotate, leading to the formation of orotidine monophosphate (OMP). In Bacteroides fragilis (strain ATCC 25285 / DSM 2151 / CCUG 4856 / JCM 11019 / LMG 10263 / NCTC 9343 / Onslow / VPI 2553 / EN-2), this protein is Orotate phosphoribosyltransferase.